Here is a 294-residue protein sequence, read N- to C-terminus: Acetaldehyde dehydrogenase (294 aa).

Residue 11-14 (SGNI) coordinates NAD(+). C126 serves as the catalytic Acyl-thioester intermediate. NAD(+) is bound by residues 157 to 165 (SAGPGTRAN) and N269.

The protein belongs to the acetaldehyde dehydrogenase family.

The enzyme catalyses acetaldehyde + NAD(+) + CoA = acetyl-CoA + NADH + H(+). The protein is Acetaldehyde dehydrogenase (pheF) of Geobacillus stearothermophilus (Bacillus stearothermophilus).